A 450-amino-acid chain; its full sequence is Chromosomal replication initiator protein DnaA (450 aa).

Positions 1–79 (MKDSYFDLNT…MEYAYDVAHD (79 aa)) are domain I, interacts with DnaA modulators. Residues 79 to 112 (DFFKPELKVIKVVANPVNNQKSNQSNSDFVATDY) are domain II. Residues 113–329 (QLNQNFTFDT…GAFNTLTLMA (217 aa)) are domain III, AAA+ region. Gly-157, Gly-159, Lys-160, and Thr-161 together coordinate ATP. The segment at 330–450 (RAGRPINVSN…NLSTKIKEKS (121 aa)) is domain IV, binds dsDNA.

The protein belongs to the DnaA family. Oligomerizes as a right-handed, spiral filament on DNA at oriC.

The protein localises to the cytoplasm. Its function is as follows. Plays an essential role in the initiation and regulation of chromosomal replication. ATP-DnaA binds to the origin of replication (oriC) to initiate formation of the DNA replication initiation complex once per cell cycle. Binds the DnaA box (a 9 base pair repeat at the origin) and separates the double-stranded (ds)DNA. Forms a right-handed helical filament on oriC DNA; dsDNA binds to the exterior of the filament while single-stranded (ss)DNA is stabiized in the filament's interior. The ATP-DnaA-oriC complex binds and stabilizes one strand of the AT-rich DNA unwinding element (DUE), permitting loading of DNA polymerase. After initiation quickly degrades to an ADP-DnaA complex that is not apt for DNA replication. Binds acidic phospholipids. This is Chromosomal replication initiator protein DnaA from Oenococcus oeni (strain ATCC BAA-331 / PSU-1).